Here is a 453-residue protein sequence, read N- to C-terminus: Ribulose bisphosphate carboxylase large chain (453 aa).

The propeptide occupies 1–2 (MS). Proline 3 is modified (N-acetylproline). An N6,N6,N6-trimethyllysine modification is found at lysine 14. Substrate-binding residues include asparagine 123 and threonine 173. The active-site Proton acceptor is the lysine 175. Lysine 177 contributes to the substrate binding site. Positions 201, 203, and 204 each coordinate Mg(2+). Residue lysine 201 is modified to N6-carboxylysine. Catalysis depends on histidine 294, which acts as the Proton acceptor. Substrate contacts are provided by arginine 295, histidine 327, and serine 379.

Belongs to the RuBisCO large chain family. Type I subfamily. Heterohexadecamer of 8 large chains and 8 small chains; disulfide-linked. The disulfide link is formed within the large subunit homodimers. Mg(2+) serves as cofactor. In terms of processing, the disulfide bond which can form in the large chain dimeric partners within the hexadecamer appears to be associated with oxidative stress and protein turnover.

It is found in the plastid. Its subcellular location is the chloroplast. It catalyses the reaction 2 (2R)-3-phosphoglycerate + 2 H(+) = D-ribulose 1,5-bisphosphate + CO2 + H2O. The enzyme catalyses D-ribulose 1,5-bisphosphate + O2 = 2-phosphoglycolate + (2R)-3-phosphoglycerate + 2 H(+). Functionally, ruBisCO catalyzes two reactions: the carboxylation of D-ribulose 1,5-bisphosphate, the primary event in carbon dioxide fixation, as well as the oxidative fragmentation of the pentose substrate in the photorespiration process. Both reactions occur simultaneously and in competition at the same active site. This chain is Ribulose bisphosphate carboxylase large chain, found in Asperula laevigata (Smooth woodruff).